Reading from the N-terminus, the 714-residue chain is Probable serine/threonine-protein kinase At1g09600 (714 aa).

The segment at 1–64 is disordered; the sequence is MGCNCTKGTR…NVGFEERSND (64 aa). Glycine 2 carries N-myristoyl glycine lipidation. Over residues 16–27 the composition is skewed to low complexity; it reads VDNSNSIVSNVN. Basic residues predominate over residues 31–46; that stretch reads RRSKPKKTPKKKKKSK. In terms of domain architecture, Protein kinase spans 163–447; sequence FEKLEKIGQG…TASALESEFF (285 aa). ATP is bound by residues 169–177 and lysine 192; that span reads IGQGTYSSV. Aspartate 287 serves as the catalytic Proton acceptor. A compositionally biased stretch (basic and acidic residues) spans 471–498; it reads KAQEEEAKRKKDTSSKQNDSKQVSRESK. 2 disordered regions span residues 471 to 579 and 693 to 714; these read KAQE…RKEL and VDKKTNRGDNRQTQAFLAANGR. Composition is skewed to polar residues over residues 506–528 and 556–573; these read NAESLTSIQKRQGQHNQVSNSDK and GVSSVNRNGENVMMGSSR.

It belongs to the protein kinase superfamily. Ser/Thr protein kinase family.

This chain is Probable serine/threonine-protein kinase At1g09600, found in Arabidopsis thaliana (Mouse-ear cress).